A 595-amino-acid chain; its full sequence is Fructan 1-exohydrolase (595 aa).

The N-terminal stretch at 1 to 20 (MAQAWAFLLPLLVLGSYVTS) is a signal peptide. D74 is a catalytic residue. Residues N167, N235, and N247 are each glycosylated (N-linked (GlcNAc...) asparagine). C445 and C491 are oxidised to a cystine. N-linked (GlcNAc...) asparagine glycosylation occurs at N566.

The protein belongs to the glycosyl hydrolase 32 family.

The enzyme catalyses Hydrolysis of terminal, non-reducing (2-&gt;1)-linked beta-D-fructofuranose residues in fructans.. With respect to regulation, inhibited by sucrose. In terms of biological role, hydrolyzes inulin-type beta-(2,1)-fructans. May play a role as a beta-(2,1)-trimmer during graminan biosynthesis. This is Fructan 1-exohydrolase from Aegilops speltoides (Goatgrass).